A 91-amino-acid polypeptide reads, in one-letter code: UPF0250 protein PFLU_5418 (91 aa).

This sequence belongs to the UPF0250 family.

This Pseudomonas fluorescens (strain SBW25) protein is UPF0250 protein PFLU_5418.